A 48-amino-acid polypeptide reads, in one-letter code: Delta-ctenitoxin-Pn1b (48 aa).

5 disulfides stabilise this stretch: cysteine 1/cysteine 15, cysteine 8/cysteine 21, cysteine 12/cysteine 48, cysteine 14/cysteine 31, and cysteine 23/cysteine 29.

It belongs to the neurotoxin 03 (Tx2) family. 05 subfamily. Expressed by the venom gland.

Its subcellular location is the secreted. Its function is as follows. Insecticidal neurotoxin that reversibly inhibits the N-methyl-D-aspartate (NMDA)-subtype of ionotropic glutamate receptor (GRIN) and inhibits inactivation of insect sodium channels (Nav). Inhibits glutamate uptake in rat brain synaptosomes. In vivo, induces immediate excitatory effects when injected intrathoracically in houseflies and cockroaches. In Phoneutria nigriventer (Brazilian armed spider), this protein is Delta-ctenitoxin-Pn1b.